A 517-amino-acid chain; its full sequence is Crotonobetaine/carnitine--CoA ligase (517 aa).

The protein belongs to the ATP-dependent AMP-binding enzyme family.

The catalysed reaction is 4-(trimethylamino)butanoate + ATP + CoA = 4-(trimethylamino)butanoyl-CoA + AMP + diphosphate. The enzyme catalyses crotonobetaine + ATP + CoA = crotonobetainyl-CoA + AMP + diphosphate. It carries out the reaction (R)-carnitine + ATP + CoA = (R)-carnitinyl-CoA + AMP + diphosphate. It participates in amine and polyamine metabolism; carnitine metabolism. Its function is as follows. Catalyzes the transfer of CoA to carnitine, generating the initial carnitinyl-CoA needed for the CaiB reaction cycle. Also has activity toward crotonobetaine and gamma-butyrobetaine. The sequence is that of Crotonobetaine/carnitine--CoA ligase from Escherichia coli O45:K1 (strain S88 / ExPEC).